Reading from the N-terminus, the 105-residue chain is MDKFYNYNSSSHQALLSFKVKPNSKQNLISNFVIINNIPYLKLSIKAIPEQGKANEEIINYLAKEWKLSRSNIEIIKGHTHSLKTILIKNINEDYLNLIINSYIK.

The protein belongs to the UPF0235 family.

The sequence is that of UPF0235 protein RAF_ORF1191 from Rickettsia africae (strain ESF-5).